A 324-amino-acid polypeptide reads, in one-letter code: Methionyl-tRNA formyltransferase (324 aa).

114-117 (SLLP) contacts (6S)-5,6,7,8-tetrahydrofolate.

This sequence belongs to the Fmt family.

It carries out the reaction L-methionyl-tRNA(fMet) + (6R)-10-formyltetrahydrofolate = N-formyl-L-methionyl-tRNA(fMet) + (6S)-5,6,7,8-tetrahydrofolate + H(+). Its function is as follows. Attaches a formyl group to the free amino group of methionyl-tRNA(fMet). The formyl group appears to play a dual role in the initiator identity of N-formylmethionyl-tRNA by promoting its recognition by IF2 and preventing the misappropriation of this tRNA by the elongation apparatus. In Parabacteroides distasonis (strain ATCC 8503 / DSM 20701 / CIP 104284 / JCM 5825 / NCTC 11152), this protein is Methionyl-tRNA formyltransferase.